Reading from the N-terminus, the 286-residue chain is DegV domain-containing protein M6_Spy1658 (286 aa).

Residues Phe-3–Gly-282 enclose the DegV domain. Positions 62 and 94 each coordinate hexadecanoate.

Functionally, may bind long-chain fatty acids, such as palmitate, and may play a role in lipid transport or fatty acid metabolism. In Streptococcus pyogenes serotype M6 (strain ATCC BAA-946 / MGAS10394), this protein is DegV domain-containing protein M6_Spy1658.